Here is a 149-residue protein sequence, read N- to C-terminus: 1,4-dihydroxy-2-naphthoyl-CoA hydrolase (149 aa).

The active site involves Asp19.

Belongs to the 4-hydroxybenzoyl-CoA thioesterase family. DHNA-CoA hydrolase subfamily.

The enzyme catalyses 1,4-dihydroxy-2-naphthoyl-CoA + H2O = 1,4-dihydroxy-2-naphthoate + CoA + H(+). Its pathway is cofactor biosynthesis; phylloquinone biosynthesis. It participates in quinol/quinone metabolism; 1,4-dihydroxy-2-naphthoate biosynthesis; 1,4-dihydroxy-2-naphthoate from chorismate: step 7/7. In terms of biological role, catalyzes the hydrolysis of 1,4-dihydroxy-2-naphthoyl-CoA (DHNA-CoA) to 1,4-dihydroxy-2-naphthoate (DHNA), a reaction involved in phylloquinone (vitamin K1) biosynthesis. The chain is 1,4-dihydroxy-2-naphthoyl-CoA hydrolase from Synechococcus sp. (strain CC9605).